A 429-amino-acid polypeptide reads, in one-letter code: Serine hydroxymethyltransferase (429 aa).

Residues L128 and 132-134 (GHL) contribute to the (6S)-5,6,7,8-tetrahydrofolate site. K237 is modified (N6-(pyridoxal phosphate)lysine).

Belongs to the SHMT family. In terms of assembly, homodimer. Pyridoxal 5'-phosphate serves as cofactor.

It localises to the cytoplasm. It carries out the reaction (6R)-5,10-methylene-5,6,7,8-tetrahydrofolate + glycine + H2O = (6S)-5,6,7,8-tetrahydrofolate + L-serine. It participates in one-carbon metabolism; tetrahydrofolate interconversion. It functions in the pathway amino-acid biosynthesis; glycine biosynthesis; glycine from L-serine: step 1/1. In terms of biological role, catalyzes the reversible interconversion of serine and glycine with tetrahydrofolate (THF) serving as the one-carbon carrier. This reaction serves as the major source of one-carbon groups required for the biosynthesis of purines, thymidylate, methionine, and other important biomolecules. Also exhibits THF-independent aldolase activity toward beta-hydroxyamino acids, producing glycine and aldehydes, via a retro-aldol mechanism. In Caulobacter vibrioides (strain ATCC 19089 / CIP 103742 / CB 15) (Caulobacter crescentus), this protein is Serine hydroxymethyltransferase.